The sequence spans 420 residues: S-adenosylmethionine synthase (420 aa).

ATP is bound at residue H16. Mg(2+) is bound at residue D18. E44 provides a ligand contact to K(+). E57 and Q100 together coordinate L-methionine. The flexible loop stretch occupies residues 100–110 (QSPDIAQGVNT). ATP contacts are provided by residues 175–177 (DGK), 251–252 (KF), D260, 266–267 (RK), A283, and K287. D260 is an L-methionine binding site. K291 is an L-methionine binding site.

Belongs to the AdoMet synthase family. As to quaternary structure, homotetramer; dimer of dimers. The cofactor is Mg(2+). Requires K(+) as cofactor.

It is found in the cytoplasm. It carries out the reaction L-methionine + ATP + H2O = S-adenosyl-L-methionine + phosphate + diphosphate. The protein operates within amino-acid biosynthesis; S-adenosyl-L-methionine biosynthesis; S-adenosyl-L-methionine from L-methionine: step 1/1. Functionally, catalyzes the formation of S-adenosylmethionine (AdoMet) from methionine and ATP. The overall synthetic reaction is composed of two sequential steps, AdoMet formation and the subsequent tripolyphosphate hydrolysis which occurs prior to release of AdoMet from the enzyme. This chain is S-adenosylmethionine synthase, found in Trichormus variabilis (strain ATCC 29413 / PCC 7937) (Anabaena variabilis).